We begin with the raw amino-acid sequence, 288 residues long: Bifunctional protein FolD (288 aa).

NADP(+)-binding positions include 166 to 168 (GAS) and I232.

This sequence belongs to the tetrahydrofolate dehydrogenase/cyclohydrolase family. Homodimer.

The enzyme catalyses (6R)-5,10-methylene-5,6,7,8-tetrahydrofolate + NADP(+) = (6R)-5,10-methenyltetrahydrofolate + NADPH. The catalysed reaction is (6R)-5,10-methenyltetrahydrofolate + H2O = (6R)-10-formyltetrahydrofolate + H(+). It participates in one-carbon metabolism; tetrahydrofolate interconversion. In terms of biological role, catalyzes the oxidation of 5,10-methylenetetrahydrofolate to 5,10-methenyltetrahydrofolate and then the hydrolysis of 5,10-methenyltetrahydrofolate to 10-formyltetrahydrofolate. This chain is Bifunctional protein FolD, found in Escherichia fergusonii (strain ATCC 35469 / DSM 13698 / CCUG 18766 / IAM 14443 / JCM 21226 / LMG 7866 / NBRC 102419 / NCTC 12128 / CDC 0568-73).